A 277-amino-acid polypeptide reads, in one-letter code: Tryptophan synthase alpha chain (277 aa).

Residues Glu-59 and Asp-70 each act as proton acceptor in the active site.

It belongs to the TrpA family. In terms of assembly, tetramer of two alpha and two beta chains.

The catalysed reaction is (1S,2R)-1-C-(indol-3-yl)glycerol 3-phosphate + L-serine = D-glyceraldehyde 3-phosphate + L-tryptophan + H2O. It functions in the pathway amino-acid biosynthesis; L-tryptophan biosynthesis; L-tryptophan from chorismate: step 5/5. In terms of biological role, the alpha subunit is responsible for the aldol cleavage of indoleglycerol phosphate to indole and glyceraldehyde 3-phosphate. The sequence is that of Tryptophan synthase alpha chain from Streptomyces avermitilis (strain ATCC 31267 / DSM 46492 / JCM 5070 / NBRC 14893 / NCIMB 12804 / NRRL 8165 / MA-4680).